We begin with the raw amino-acid sequence, 688 residues long: DNA-directed RNA polymerase subunit beta' (688 aa).

Zn(2+) contacts are provided by C69, C71, C87, and C90. Residues D489, D491, and D493 each coordinate Mg(2+).

Belongs to the RNA polymerase beta' chain family. RpoC1 subfamily. As to quaternary structure, in plastids the minimal PEP RNA polymerase catalytic core is composed of four subunits: alpha, beta, beta', and beta''. When a (nuclear-encoded) sigma factor is associated with the core the holoenzyme is formed, which can initiate transcription. The cofactor is Mg(2+). Zn(2+) serves as cofactor.

Its subcellular location is the plastid. It localises to the chloroplast. It catalyses the reaction RNA(n) + a ribonucleoside 5'-triphosphate = RNA(n+1) + diphosphate. DNA-dependent RNA polymerase catalyzes the transcription of DNA into RNA using the four ribonucleoside triphosphates as substrates. This is DNA-directed RNA polymerase subunit beta' from Piper cenocladum (Ant piper).